A 207-amino-acid polypeptide reads, in one-letter code: MPLPDFRLIRLLPLAALVLTACSVTTPKGPGKSPDSPQWRQHQQDVRNLNQYQTRGAFAYISDQQKVYARFFWQQTGQDRYRLLLTNPLGSTELELNAQPGNVQLVDNKGQRYTADDAEEMIGKLTGMPIPLNSLRQWILGLPGDATDYKLDDQYRLSEITYSQNGKNWKVVYCGYDTKTQPAMPANMELTDGGQRIKLKMDNWIVK.

The first 21 residues, 1 to 21, serve as a signal peptide directing secretion; it reads MPLPDFRLIRLLPLAALVLTA. Residue Cys-22 is the site of N-palmitoyl cysteine attachment. Cys-22 carries the S-diacylglycerol cysteine lipid modification.

It belongs to the LolB family. In terms of assembly, monomer.

Its subcellular location is the cell outer membrane. Plays a critical role in the incorporation of lipoproteins in the outer membrane after they are released by the LolA protein. The sequence is that of Outer-membrane lipoprotein LolB from Shigella dysenteriae serotype 1 (strain Sd197).